The following is a 1379-amino-acid chain: Partitioning defective protein 3 (1379 aa).

The span at 1–23 (MSASSTSSSSTSCPEGGEPSGSC) shows a compositional bias: low complexity. Disordered stretches follow at residues 1 to 32 (MSAS…GEST) and 208 to 335 (YNVG…SDRK). Polar residues-rich tracts occupy residues 239 to 256 (SFDQ…PKPS) and 272 to 284 (ILRS…ASGS). Basic and acidic residues-rich tracts occupy residues 302 to 315 (EVEK…ERKS) and 322 to 335 (DKNP…SDRK). PDZ domains follow at residues 381-483 (LVTF…IINR) and 515-599 (VVEL…SRVS). The stretch at 606–626 (TSASSENKENEETLKVVEEEK) forms a coiled coil. The region spanning 659–750 (VIPFINGSSS…EVGMISSNVR (92 aa)) is the PDZ 3 domain. 5 disordered regions span residues 767-873 (DLSR…MGAA), 887-918 (HQRQ…RSPM), 949-1085 (QSME…GGNV), 1273-1301 (VEPV…SGSS), and 1350-1379 (AYET…FPQY). Low complexity-rich tracts occupy residues 776 to 786 (SSPSPSSRMSS) and 798 to 826 (ATRG…AVPA). 2 stretches are compositionally biased toward basic and acidic residues: residues 828-844 (LTER…RNDE) and 854-869 (FNRE…EKRG). Residues 894-912 (PTSSTQKRSKSQPRSSSQR) show a composition bias toward low complexity. Polar residues predominate over residues 967-977 (QIPTGSSSKVQ). Composition is skewed to basic and acidic residues over residues 1030-1040 (KSRDASPEKTP) and 1048-1060 (SVER…DERN). The span at 1290 to 1301 (STSSGAVASGSS) shows a compositional bias: low complexity.

The protein belongs to the PAR3 family. Required, together with pkc-3, for the localization of par-6; par-6 is involved in localizing/maintaining par-3 at the cell periphery. Interacts with par-6 and pkc-3 for localization at the periphery of anterior cortex of the embryo. As to expression, asymmetrically distributed at the periphery of the zygote and in dividing blastomeres of the germline lineage. Coexpressed with par-6; patchy expression observed at the periphery after completion of meiosis I and in meiosis II. On completion of metaphase II, expression is restricted to the anterior 85% of embryo length; this decreases to 55% in embryos between prophase and telophase of the first mitosis. During the first cleavage, expression is detected in the advancing furrow. Transiently coexpressed and colocalized asymmetrically with par-6 and pkc-3, in the developing somatic gonad, including the spermathecal precursor cells of L4 larvae.

The protein localises to the cytoplasm. Functionally, in cooperation with pkc-3, required for establishing cell polarity and regulating spindle orientation in the early embryo. Localization is crucial for recruiting par-6 and pkc-3 to the peripheral apical cortex and restricting par-2 to basolateral surfaces. Necessary for apicobasal and anterior-posterior asymmetries associated with cell adhesion and gastrulation during the first few cycles of embryogenesis, and also for epithelial cell polarity in the distal spermatheca. Regulates the asymmetric localization of csnk-1, ppk-1 and gpr-1/2 during the first embryonic division. In Caenorhabditis elegans, this protein is Partitioning defective protein 3.